We begin with the raw amino-acid sequence, 430 residues long: Glutamyl-tRNA reductase (430 aa).

Substrate contacts are provided by residues 49–52 (TCNR), Ser109, 114–116 (EGQ), and Gln120. The active-site Nucleophile is Cys50. 189–194 (GAGKMA) contacts NADP(+).

This sequence belongs to the glutamyl-tRNA reductase family. As to quaternary structure, homodimer.

It carries out the reaction (S)-4-amino-5-oxopentanoate + tRNA(Glu) + NADP(+) = L-glutamyl-tRNA(Glu) + NADPH + H(+). Its pathway is porphyrin-containing compound metabolism; protoporphyrin-IX biosynthesis; 5-aminolevulinate from L-glutamyl-tRNA(Glu): step 1/2. It participates in porphyrin-containing compound metabolism; chlorophyll biosynthesis. Functionally, catalyzes the NADPH-dependent reduction of glutamyl-tRNA(Glu) to glutamate 1-semialdehyde (GSA). This chain is Glutamyl-tRNA reductase, found in Crocosphaera subtropica (strain ATCC 51142 / BH68) (Cyanothece sp. (strain ATCC 51142)).